The primary structure comprises 559 residues: Formate--tetrahydrofolate ligase (559 aa).

Residue 68–75 participates in ATP binding; the sequence is TPAGEGKT.

The protein belongs to the formate--tetrahydrofolate ligase family.

It catalyses the reaction (6S)-5,6,7,8-tetrahydrofolate + formate + ATP = (6R)-10-formyltetrahydrofolate + ADP + phosphate. The protein operates within one-carbon metabolism; tetrahydrofolate interconversion. The protein is Formate--tetrahydrofolate ligase of Moorella thermoacetica (strain ATCC 39073 / JCM 9320).